The chain runs to 436 residues: MTQQTAQQEQQKSEVKIYSREELKQKTLAELQKIGKELGLTRTTGLKKEELIEKILKAQLEKSRLVFVKGVLEILPEGYGFLRMPENNYMPSWNDVYVAPSQIKKFGLRTGDTIEGFARLPRENEKYKALIRMESVNGLPPDPEILKRRPQFEKLTPLHPMERFKLEYDPNELSTRVVSLIAPIGKGQRGLIVAPPKAGKTVLLQKIAQAIIRNHPEVYLIILLIDERPEEVTEMRRIVKDKAEVVASTFDEPPERHMQVAEIVVEKAKRMVELKKDVVILMDSLTRFTRASNAVTPPTGRVLTGGIEITAFQRPKKFFGAARNIEEGGSLTIIATALVETGSKMDDVIYEEFKGTGNMEIHLDRRLMERRIFPAINIEKSGTRKEELLLEPWELQRIWVLRKFLSTMDPVEAMEFLLEKLRRFKTNEEFLKAMNA.

Positions 65 to 140 (LVFVKGVLEI…IRMESVNGLP (76 aa)) constitute a Rho RNA-BD domain. ATP-binding positions include 185 to 190 (GKGQRG), 197 to 202 (KAGKTV), and Arg228.

The protein belongs to the Rho family. Homohexamer. The homohexamer assembles into an open ring structure.

Functionally, facilitates transcription termination by a mechanism that involves Rho binding to the nascent RNA, activation of Rho's RNA-dependent ATPase activity, and release of the mRNA from the DNA template. This Aquifex aeolicus (strain VF5) protein is Transcription termination factor Rho.